A 336-amino-acid polypeptide reads, in one-letter code: Probable assembly chaperone of rpl4 (336 aa).

4 TPR repeats span residues 39 to 72 (GRAF…SKNL), 75 to 108 (DQGY…LERL), 110 to 143 (IDKG…QPDA), and 162 to 195 (AEAL…ISRA). Residues 316-336 (DEENEEAEWETSENEEEMDED) are disordered.

The protein belongs to the ACL4 family.

The protein localises to the cytoplasm. Its subcellular location is the nucleus. The protein resides in the nucleolus. Acts as a chaperone for the L4 ribosomal subunit encoded by rpl4A and rpl4B, required for hierarchical ribosome assembly. Shields ribosomal protein L4 until timely release and insertion into the pre-ribosome is possible, once ribosomal protein L18 is present. This chain is Probable assembly chaperone of rpl4, found in Schizosaccharomyces pombe (strain 972 / ATCC 24843) (Fission yeast).